Reading from the N-terminus, the 121-residue chain is Large ribosomal subunit protein bL19 (121 aa).

It belongs to the bacterial ribosomal protein bL19 family.

Functionally, this protein is located at the 30S-50S ribosomal subunit interface and may play a role in the structure and function of the aminoacyl-tRNA binding site. The protein is Large ribosomal subunit protein bL19 of Chlorobaculum tepidum (strain ATCC 49652 / DSM 12025 / NBRC 103806 / TLS) (Chlorobium tepidum).